The primary structure comprises 101 residues: 2-amino-4-ketopentanoate thiolase alpha subunit (101 aa).

It belongs to the OrtA family. As to quaternary structure, heterodimer with OrtB.

It carries out the reaction D-alanine + acetyl-CoA = (2R)-2-amino-4-oxopentanoate + CoA. With respect to regulation, completely inhibited by p-chloromercuribenzoate (p-ClHgBzO) and acetyl-CoA, and partially inhibited by N-ethylmaleimide. Involved in the ornithine fermentation pathway. Catalyzes the thiolytic cleavage of 2-amino-4-ketopentanoate (AKP) with coenzyme A (CoA) to form acetyl-CoA and alanine. It is strictly specific for AKP. The sequence is that of 2-amino-4-ketopentanoate thiolase alpha subunit from Acetoanaerobium sticklandii (strain ATCC 12662 / DSM 519 / JCM 1433 / CCUG 9281 / NCIMB 10654 / HF) (Clostridium sticklandii).